Here is a 679-residue protein sequence, read N- to C-terminus: NADPH--cytochrome P450 reductase (679 aa).

Residues 1 to 21 (MADSHGDTGATMPEAAAQEAS) are Lumenal-facing. Residues 22–42 (VFSMTDVVLFSLIVGLITYWF) form a helical membrane-spanning segment. Topologically, residues 43–679 (LFRKKKEEVP…KGRYSLDVWS (637 aa)) are cytoplasmic. A Phosphoserine modification is found at S64. The 145-residue stretch at 81-225 (IVVFYGSQTG…DFITWREQFW (145 aa)) folds into the Flavodoxin-like domain. FMN contacts are provided by residues 87–92 (SQTGTA), 139–142 (ATYG), 174–183 (LGNKTYEHFN), and D209. The FAD-binding FR-type domain maps to 280–522 (KNPFLATVTT…FVRKSQFRLP (243 aa)). Residue R299 participates in NADP(+) binding. Residues R425, 455 to 458 (RYYS), 473 to 475 (CAV), Y479, and 489 to 492 (GVAT) contribute to the FAD site. NADP(+) is bound by residues T536, 597–598 (SR), 603–607 (KVYVQ), and D640. W678 is an FAD binding site.

Belongs to the NADPH--cytochrome P450 reductase family. The protein in the N-terminal section; belongs to the flavodoxin family. It in the C-terminal section; belongs to the flavoprotein pyridine nucleotide cytochrome reductase family. Requires FAD as cofactor. FMN is required as a cofactor.

The protein resides in the endoplasmic reticulum membrane. It carries out the reaction 2 oxidized [cytochrome P450] + NADPH = 2 reduced [cytochrome P450] + NADP(+) + H(+). This enzyme is required for electron transfer from NADP to cytochrome P450 in microsomes. It can also provide electron transfer to heme oxygenase and cytochrome B5. This chain is NADPH--cytochrome P450 reductase, found in Oryctolagus cuniculus (Rabbit).